A 284-amino-acid chain; its full sequence is MSAQILDGKAIALELRDSIQKEVEAQVANGKKPPGLAVILVGEDPASQVYVKNKKIACEKAGFNDVSMVLPAETSQAELLAKIDELNTRDDVHGIIVQLPVPDHIDPEEIIERIDPKKDVDGFHPYNMGRLATRLPELAPCTPHGVMTMLAKTGIPLRGLNAVVVGASNIVGVPMALELLNERATVTVCHSATKDLPQKVAEADLVVVGVGIPNMVKGDWIKDGAIVIDVGINRLDDGSLCGDVEYDVAKEKASWITPVPGGVGPMTIATLLQNTLQAAYGVKA.

NADP(+)-binding positions include 166–168 (GAS), Ser-191, and Ile-232.

It belongs to the tetrahydrofolate dehydrogenase/cyclohydrolase family. As to quaternary structure, homodimer.

It carries out the reaction (6R)-5,10-methylene-5,6,7,8-tetrahydrofolate + NADP(+) = (6R)-5,10-methenyltetrahydrofolate + NADPH. It catalyses the reaction (6R)-5,10-methenyltetrahydrofolate + H2O = (6R)-10-formyltetrahydrofolate + H(+). Its pathway is one-carbon metabolism; tetrahydrofolate interconversion. Catalyzes the oxidation of 5,10-methylenetetrahydrofolate to 5,10-methenyltetrahydrofolate and then the hydrolysis of 5,10-methenyltetrahydrofolate to 10-formyltetrahydrofolate. The chain is Bifunctional protein FolD 1 from Hydrogenovibrio crunogenus (strain DSM 25203 / XCL-2) (Thiomicrospira crunogena).